Here is a 204-residue protein sequence, read N- to C-terminus: Recombination protein RecR (204 aa).

The C4-type zinc finger occupies 59 to 74 (CTRCNTFTELEICGTC). One can recognise a Toprim domain in the interval 82-181 (TLLCVVETPA…KVSRLARGVP (100 aa)).

This sequence belongs to the RecR family.

May play a role in DNA repair. It seems to be involved in an RecBC-independent recombinational process of DNA repair. It may act with RecF and RecO. This is Recombination protein RecR from Cupriavidus metallidurans (strain ATCC 43123 / DSM 2839 / NBRC 102507 / CH34) (Ralstonia metallidurans).